The following is a 77-amino-acid chain: uncharacterized protein (77 aa).

The helical transmembrane segment at 57–76 threads the bilayer; that stretch reads NSAVICTLIANLMAFFMLLT.

It is found in the membrane. This is an uncharacterized protein from Schizosaccharomyces pombe (strain 972 / ATCC 24843) (Fission yeast).